The primary structure comprises 491 residues: Glycogen synthase 1 (491 aa).

Lys-15 is a binding site for ADP-alpha-D-glucose.

The protein belongs to the glycosyltransferase 1 family. Bacterial/plant glycogen synthase subfamily.

It catalyses the reaction [(1-&gt;4)-alpha-D-glucosyl](n) + ADP-alpha-D-glucose = [(1-&gt;4)-alpha-D-glucosyl](n+1) + ADP + H(+). It participates in glycan biosynthesis; glycogen biosynthesis. Synthesizes alpha-1,4-glucan chains using ADP-glucose. The polypeptide is Glycogen synthase 1 (Synechococcus sp. (strain JA-3-3Ab) (Cyanobacteria bacterium Yellowstone A-Prime)).